Consider the following 349-residue polypeptide: Delta(7)-sterol 5(6)-desaturase ERG3A (349 aa).

Helical transmembrane passes span 84 to 104 (ITWI…YIFI), 124 to 144 (IIAA…FFLL), and 162 to 182 (LWYD…CIYW). Positions 170–296 (PLFLLFTDFC…FTAFDRMGGT (127 aa)) constitute a Fatty acid hydroxylase domain. Positions 184 to 188 (HRWLH) match the Histidine box-1 motif. The Histidine box-2 signature appears at 197–201 (HKLHH). A helical membrane pass occupies residues 227-247 (HIFPFIFPLQKMAYVALFVFV). A Histidine box-3 motif is present at residues 272–276 (HSLHH).

The protein belongs to the sterol desaturase family.

The protein localises to the endoplasmic reticulum membrane. It catalyses the reaction episterol + 2 Fe(II)-[cytochrome b5] + O2 + 2 H(+) = 5-dehydroepisterol + 2 Fe(III)-[cytochrome b5] + 2 H2O. It functions in the pathway steroid metabolism; ergosterol biosynthesis. Functionally, C-5 sterol desaturase; part of the third module of ergosterol biosynthesis pathway that includes the late steps of the pathway. ERG3A and ERG3BB catalyze the introduction of a C-5 double bond in the B ring to produce 5-dehydroepisterol. The third module or late pathway involves the ergosterol synthesis itself through consecutive reactions that mainly occur in the endoplasmic reticulum (ER) membrane. Firstly, the squalene synthase ERG9 catalyzes the condensation of 2 farnesyl pyrophosphate moieties to form squalene, which is the precursor of all steroids. Squalene synthase is crucial for balancing the incorporation of farnesyl diphosphate (FPP) into sterol and nonsterol isoprene synthesis. Secondly, squalene is converted into lanosterol by the consecutive action of the squalene epoxidase ERG1 and the lanosterol synthase ERG7. Then, the delta(24)-sterol C-methyltransferase ERG6 methylates lanosterol at C-24 to produce eburicol. Eburicol is the substrate of the sterol 14-alpha demethylase encoded by CYP51A, CYP51B and CYP51C, to yield 4,4,24-trimethyl ergosta-8,14,24(28)-trienol. CYP51B encodes the enzyme primarily responsible for sterol 14-alpha-demethylation, and plays an essential role in ascospore formation. CYP51A encodes an additional sterol 14-alpha-demethylase, induced on ergosterol depletion and responsible for the intrinsic variation in azole sensitivity. The third CYP51 isoform, CYP51C, does not encode a sterol 14-alpha-demethylase, but is required for full virulence on host wheat ears. The C-14 reductase ERG24 then reduces the C14=C15 double bond which leads to 4,4-dimethylfecosterol. A sequence of further demethylations at C-4, involving the C-4 demethylation complex containing the C-4 methylsterol oxidases ERG25, the sterol-4-alpha-carboxylate 3-dehydrogenase ERG26 and the 3-keto-steroid reductase ERG27, leads to the production of fecosterol via 4-methylfecosterol. ERG28 has a role as a scaffold to help anchor ERG25, ERG26 and ERG27 to the endoplasmic reticulum. The C-8 sterol isomerase ERG2 then catalyzes the reaction which results in unsaturation at C-7 in the B ring of sterols and thus converts fecosterol to episterol. The sterol-C5-desaturases ERG3A and ERG3BB then catalyze the introduction of a C-5 double bond in the B ring to produce 5-dehydroepisterol. The C-22 sterol desaturases ERG5A and ERG5B further convert 5-dehydroepisterol into ergosta-5,7,22,24(28)-tetraen-3beta-ol by forming the C-22(23) double bond in the sterol side chain. Finally, ergosta-5,7,22,24(28)-tetraen-3beta-ol is substrate of the C-24(28) sterol reductase ERG4 to produce ergosterol. The polypeptide is Delta(7)-sterol 5(6)-desaturase ERG3A (Gibberella zeae (strain ATCC MYA-4620 / CBS 123657 / FGSC 9075 / NRRL 31084 / PH-1) (Wheat head blight fungus)).